We begin with the raw amino-acid sequence, 576 residues long: Glucose-6-phosphate 1-dehydrogenase 1, chloroplastic (576 aa).

The transit peptide at 1 to 50 directs the protein to the chloroplast; that stretch reads MATHSMIIPSPSSSSSSLATAASPFKETLPLFSRSLTFPRKSLFSQVRLR. NADP(+) is bound by residues 97–104 and Arg131; that span reads GASGDLAK. An intrachain disulfide couples Cys149 to Cys157. Lys234 lines the NADP(+) pocket. D-glucose 6-phosphate-binding positions include Lys234, 264–268, Glu302, and Asp321; that span reads HYLGK. His326 functions as the Proton acceptor in the catalytic mechanism. Residue Lys419 coordinates NADP(+). Residues Lys422 and Arg427 each contribute to the D-glucose 6-phosphate site. Positions 432 and 461 each coordinate NADP(+). Gln463 provides a ligand contact to D-glucose 6-phosphate. Residues 469-471 and Arg554 each bind NADP(+); that span reads YLR.

Belongs to the glucose-6-phosphate dehydrogenase family. As to quaternary structure, forms homodimer. Interacts with G6PD2, G6PD3 and G6PD4. Expressed in leaves, stems, buds, flowers and siliques.

The protein localises to the plastid. The protein resides in the chloroplast stroma. It localises to the peroxisome. It carries out the reaction D-glucose 6-phosphate + NADP(+) = 6-phospho-D-glucono-1,5-lactone + NADPH + H(+). The protein operates within carbohydrate degradation; pentose phosphate pathway; D-ribulose 5-phosphate from D-glucose 6-phosphate (oxidative stage): step 1/3. With respect to regulation, regulated by metabolites. Post-translationally inactivated by cysteine-mediated redox modification via the ferredoxin-thioredoxin system in the light and this avoids futile cycles with photosynthetic CO2 fixation. Functionally, catalyzes the rate-limiting step of the oxidative pentose-phosphate pathway, which represents a route for the dissimilation of carbohydrates besides glycolysis. The main function of this enzyme is to provide reducing power (NADPH) and pentose phosphates for fatty acid and nucleic acid synthesis which are involved in membrane synthesis and cell division. The sequence is that of Glucose-6-phosphate 1-dehydrogenase 1, chloroplastic from Arabidopsis thaliana (Mouse-ear cress).